We begin with the raw amino-acid sequence, 468 residues long: Argininosuccinate synthase (468 aa).

ATP is bound by residues 10–18 (AYSGGLDTS) and A37. L-citrulline contacts are provided by Y90 and S95. G120 is a binding site for ATP. L-aspartate contacts are provided by T122, N126, and D127. L-citrulline is bound at residue N126. R130, S182, S191, E267, and Y279 together coordinate L-citrulline. Residues 445–457 (PVAAKATAKPVKA) are compositionally biased toward low complexity. Residues 445–468 (PVAAKATAKPVKAPVKKPIAKKKG) form a disordered region. Basic residues predominate over residues 458 to 468 (PVKKPIAKKKG).

The protein belongs to the argininosuccinate synthase family. Type 1 subfamily. As to quaternary structure, homotetramer.

It localises to the cytoplasm. The catalysed reaction is L-citrulline + L-aspartate + ATP = 2-(N(omega)-L-arginino)succinate + AMP + diphosphate + H(+). Its pathway is amino-acid biosynthesis; L-arginine biosynthesis; L-arginine from L-ornithine and carbamoyl phosphate: step 2/3. The protein is Argininosuccinate synthase of Dechloromonas aromatica (strain RCB).